The chain runs to 344 residues: MKNCERFANLALAGLTLAPLVVRVNPNLNVILTACITVYVGCFRSVKDTPPTETMSKEHAMRFPLVGSAMLLSLFLLFKFLSKDLVNAVLTAYFFVLGIVALSATLLPAIRRFLPNPWNDNLIVWRFPYFKSLEVEFTKSQVVAGIPGTFFCAWYAWKKHWLANNILGLSFCIQGIEMLSLGSFKTGAILLAGLFFYDIFWVFFTPVMVSVAKSFDAPIKLLFPTGDALRPYSMLGLGDIVIPGIFVALALRFDVSRRRQPQYFTSAFIGYAVGVILTIVVMNWFQAAQPALLYIVPAVIGFLASHCIWNGDIKPLLAFDESKTEEATTDESKTSEEVNKAHDE.

The Lumenal segment spans residues 1 to 11; it reads MKNCERFANLA. A helical transmembrane segment spans residues 12 to 32; that stretch reads LAGLTLAPLVVRVNPNLNVIL. Topologically, residues 33–62 are cytoplasmic; sequence TACITVYVGCFRSVKDTPPTETMSKEHAMR. A helical transmembrane segment spans residues 63–83; sequence FPLVGSAMLLSLFLLFKFLSK. The Lumenal segment spans residues 84 to 89; sequence DLVNAV. The chain crosses the membrane as a helical span at residues 90–110; it reads LTAYFFVLGIVALSATLLPAI. The Cytoplasmic segment spans residues 111 to 136; it reads RRFLPNPWNDNLIVWRFPYFKSLEVE. Residues 137–157 traverse the membrane as a helical segment; sequence FTKSQVVAGIPGTFFCAWYAW. Over 158 to 160 the chain is Lumenal; it reads KKH. Residues 161–181 traverse the membrane as a helical segment; the sequence is WLANNILGLSFCIQGIEMLSL. Residues 182–188 are Cytoplasmic-facing; that stretch reads GSFKTGA. Residues 189 to 209 form a helical membrane-spanning segment; the sequence is ILLAGLFFYDIFWVFFTPVMV. Asp-198 is an active-site residue. Residues 210-230 are Lumenal-facing; the sequence is SVAKSFDAPIKLLFPTGDALR. The helical transmembrane segment at 231–251 threads the bilayer; the sequence is PYSMLGLGDIVIPGIFVALAL. Asp-239 is a catalytic residue. Residues 252-263 lie on the Cytoplasmic side of the membrane; the sequence is RFDVSRRRQPQY. Residues 264-284 form a helical membrane-spanning segment; it reads FTSAFIGYAVGVILTIVVMNW. Residues 285–290 lie on the Lumenal side of the membrane; sequence FQAAQP. The PAL motif lies at 290 to 292; sequence PAL. A helical membrane pass occupies residues 291 to 311; it reads ALLYIVPAVIGFLASHCIWNG. Over 312–344 the chain is Cytoplasmic; sequence DIKPLLAFDESKTEEATTDESKTSEEVNKAHDE. A disordered region spans residues 323–344; that stretch reads KTEEATTDESKTSEEVNKAHDE.

Belongs to the peptidase A22B family. As to expression, ubiquitous with the highest expression in emerging leaves, roots, and floral tissues (at the protein level). Highly detected in pollen.

It is found in the endoplasmic reticulum membrane. In terms of biological role, intramembrane-cleaving aspartic protease (I-CLiP) that cleaves type II membrane signal peptides in the hydrophobic plane of the membrane. Catalyzes intramembrane proteolysis of some signal peptides after they have been cleaved from a preprotein, resulting in the release of the fragment from the ER membrane into the cytoplasm. Plays a critical role in the development and function of the reproductive tissues, especially in pollen development. The polypeptide is Signal peptide peptidase (SPP) (Arabidopsis thaliana (Mouse-ear cress)).